The chain runs to 514 residues: Sugar transport protein 10 (514 aa).

Residues 1–18 (MAGGAFVSEGGGGGRSYE) are Cytoplasmic-facing. Transmembrane regions (helical) follow at residues 19 to 39 (GGVTAFVIMTCIVAAMGGLLF), 86 to 106 (LFTSSLYLAALVASFMASVIT), 113 to 133 (VSMFIGGLAFLIGALFNAFAV), 135 to 155 (VSMLIIGRLLLGVGVGFANQS), 170 to 190 (GALNIGFQMAITIGILVANLI), 204 to 224 (VSLGLAAVPAVVMVIGSFILP), 285 to 305 (LIFCSAIPFFQQITGINVIMF), 320 to 340 (AALMSAVITGVVNMLSTFVSI), 350 to 370 (LLFLEGGIQMFICQLLVGSFI), and 389 to 409 (WILAFICVYVAGFAWSWGPLG). Cysteine 77 and cysteine 449 are disulfide-bonded. Glutamine 177 is a beta-D-glucose binding site. The beta-D-glucose site is built by glutamine 295, glutamine 296, asparagine 301, and asparagine 332. Residue tryptophan 410 coordinates beta-D-glucose. A run of 2 helical transmembrane segments spans residues 428–448 (INVSVNMFFTFLIGQFFLTML) and 453–473 (FGLFYFFASMVAIMTVFIYFL). At 474–514 (LPETKGVPIEEMGRVWKQHWFWKKYIPEDAIIGGHDDNNTN) the chain is on the cytoplasmic side.

The protein belongs to the major facilitator superfamily. Sugar transporter (TC 2.A.1.1) family. In terms of tissue distribution, expressed in primordia of lateral roots, pollinated stigmata, and pollen tubes.

Its subcellular location is the membrane. The enzyme catalyses D-glucose(out) + H(+)(out) = D-glucose(in) + H(+)(in). The catalysed reaction is D-mannose(out) + H(+)(out) = D-mannose(in) + H(+)(in). It catalyses the reaction D-galactose(in) + H(+)(in) = D-galactose(out) + H(+)(out). Hexose-H(+) symporter that catalyzes the high-affinity uptake of glucose, galactose and mannose. Proton-coupled symporter responsible for the uptake of glucose from the apoplast into the cells. This chain is Sugar transport protein 10, found in Arabidopsis thaliana (Mouse-ear cress).